A 313-amino-acid chain; its full sequence is GTPase Era (313 aa).

In terms of domain architecture, Era-type G spans 13 to 186; that stretch reads RSGFVSFVGR…ADLLVGLLPE (174 aa). A G1 region spans residues 21-28; the sequence is GRPNAGKS. 21 to 28 is a binding site for GTP; the sequence is GRPNAGKS. Positions 47–51 are G2; sequence QTTRT. The segment at 68-71 is G3; that stretch reads DTPG. GTP contacts are provided by residues 68–72 and 131–134; these read DTPGL and TKTD. The G4 stretch occupies residues 131–134; that stretch reads TKTD. Residues 165 to 167 are G5; sequence VSA. The region spanning 217–299 is the KH type-2 domain; that stretch reads LRDELPHSVA…YLDLHVKIAK (83 aa).

The protein belongs to the TRAFAC class TrmE-Era-EngA-EngB-Septin-like GTPase superfamily. Era GTPase family. In terms of assembly, monomer.

It localises to the cytoplasm. It is found in the cell membrane. In terms of biological role, an essential GTPase that binds both GDP and GTP, with rapid nucleotide exchange. Plays a role in 16S rRNA processing and 30S ribosomal subunit biogenesis and possibly also in cell cycle regulation and energy metabolism. The sequence is that of GTPase Era from Nocardioides sp. (strain ATCC BAA-499 / JS614).